The following is a 942-amino-acid chain: Homeobox transcription factor phx1 (942 aa).

4 stretches are compositionally biased toward polar residues: residues 1-19 (MRSY…NINY), 61-73 (HLQG…TNPN), 99-116 (ADNN…TNPS), and 122-135 (IVKS…SKQN). Disordered stretches follow at residues 1-54 (MRSY…MQLP), 61-80 (HLQG…PEFD), 87-172 (KQEK…KKQR), 604-651 (WANQ…STST), and 892-922 (SSSG…DVYS). The span at 142–151 (SVEKAKENVA) shows a compositional bias: basic and acidic residues. Low complexity predominate over residues 153–164 (ESGTPESGGSTS). Positions 164-224 (SAPKSKKQRL…QNRRAKSKLI (61 aa)) form a DNA-binding region, homeobox. Composition is skewed to polar residues over residues 604–614 (WANQLPRQPDS) and 630–641 (SHDTSSEYGNKS).

The protein localises to the nucleus. Trnascription factor that regulates the expression of the homocitrate synthase (HCS) lys4. This is Homeobox transcription factor phx1 (phx1) from Schizosaccharomyces pombe (strain 972 / ATCC 24843) (Fission yeast).